The primary structure comprises 67 residues: Large ribosomal subunit protein bL32 (67 aa).

Basic residues predominate over residues 1-19 (MAVPKRKMSRANTRARRSQ). The segment at 1–21 (MAVPKRKMSRANTRARRSQWK) is disordered.

This sequence belongs to the bacterial ribosomal protein bL32 family.

The sequence is that of Large ribosomal subunit protein bL32 from Micrococcus luteus (strain ATCC 4698 / DSM 20030 / JCM 1464 / CCM 169 / CCUG 5858 / IAM 1056 / NBRC 3333 / NCIMB 9278 / NCTC 2665 / VKM Ac-2230) (Micrococcus lysodeikticus).